A 672-amino-acid polypeptide reads, in one-letter code: Bifunctional polymyxin resistance protein ArnA (672 aa).

Residues 1–310 form a formyltransferase ArnAFT region; that stretch reads MKAIVFAYHD…EMGMVPQAKL (310 aa). His104 acts as the Proton donor; for formyltransferase activity in catalysis. Residues Arg114 and 136–140 contribute to the (6R)-10-formyltetrahydrofolate site; that span reads VSRAD. A dehydrogenase ArnADH region spans residues 320–672; sequence RRTRVLILGV…HADNVTDTQG (353 aa). NAD(+) contacts are provided by residues Asp353 and 374–375; that span reads DI. UDP-alpha-D-glucuronate-binding positions include Ala399, Tyr404, and 438 to 439; that span reads TS. The Proton acceptor; for decarboxylase activity role is filled by Glu440. UDP-alpha-D-glucuronate-binding positions include Arg466, Asn498, 532–541, and Tyr619; that span reads KLVDGGAQKR. Residue Arg625 is the Proton donor; for decarboxylase activity of the active site.

This sequence in the N-terminal section; belongs to the Fmt family. UDP-L-Ara4N formyltransferase subfamily. In the C-terminal section; belongs to the NAD(P)-dependent epimerase/dehydratase family. UDP-glucuronic acid decarboxylase subfamily. Homohexamer, formed by a dimer of trimers.

The enzyme catalyses UDP-alpha-D-glucuronate + NAD(+) = UDP-beta-L-threo-pentopyranos-4-ulose + CO2 + NADH. It carries out the reaction UDP-4-amino-4-deoxy-beta-L-arabinose + (6R)-10-formyltetrahydrofolate = UDP-4-deoxy-4-formamido-beta-L-arabinose + (6S)-5,6,7,8-tetrahydrofolate + H(+). The protein operates within nucleotide-sugar biosynthesis; UDP-4-deoxy-4-formamido-beta-L-arabinose biosynthesis; UDP-4-deoxy-4-formamido-beta-L-arabinose from UDP-alpha-D-glucuronate: step 1/3. It functions in the pathway nucleotide-sugar biosynthesis; UDP-4-deoxy-4-formamido-beta-L-arabinose biosynthesis; UDP-4-deoxy-4-formamido-beta-L-arabinose from UDP-alpha-D-glucuronate: step 3/3. It participates in bacterial outer membrane biogenesis; lipopolysaccharide biosynthesis. In terms of biological role, bifunctional enzyme that catalyzes the oxidative decarboxylation of UDP-glucuronic acid (UDP-GlcUA) to UDP-4-keto-arabinose (UDP-Ara4O) and the addition of a formyl group to UDP-4-amino-4-deoxy-L-arabinose (UDP-L-Ara4N) to form UDP-L-4-formamido-arabinose (UDP-L-Ara4FN). The modified arabinose is attached to lipid A and is required for resistance to polymyxin and cationic antimicrobial peptides. This Pectobacterium carotovorum subsp. carotovorum (strain PC1) protein is Bifunctional polymyxin resistance protein ArnA.